Consider the following 238-residue polypeptide: Ribosomal RNA small subunit methyltransferase G (238 aa).

Residues G78, F83, 129–130 (AE), and R148 contribute to the S-adenosyl-L-methionine site. The tract at residues 217–238 (KKKETPKKYPRKAGTPAKSPIK) is disordered.

Belongs to the methyltransferase superfamily. RNA methyltransferase RsmG family.

The protein resides in the cytoplasm. Its function is as follows. Specifically methylates the N7 position of a guanine in 16S rRNA. This chain is Ribosomal RNA small subunit methyltransferase G, found in Lactococcus lactis subsp. cremoris (strain MG1363).